The primary structure comprises 695 residues: MFDVESLLKKLNVSEDKKENILQKEQLKKNLETLYTNFDTDNKLLFTLACTAPKKIDILIFGILINENVIKNDATLRASMKFAIKNTDVTYEELKDFILKNTKSKEEVSEIINKACLSGKSKKEVYIILKNKLPFEDSKYLMDEVNKFEIDTSKSKKVKDWLEEGEVSMLHKPGDNPQLNEKILKDHLERTGGKVVTRFPPEPNGILHIGHAKAINLDFGYAEKYNGICYLRFDDTNPRNEEDYYFESIIEDVKWLGFEPYAITSSSKYFGDMCELAEKLILKDKAYICELSNEELKKRRRMLSEAFETDKDKSIEELGLILSPYRNREISENLKIFREMVEKKHKEGDYTLRFKMDIRSKNPMMFDLVGMRIIDCDHVVTKDKYNLYPSYEFALCVSDSLEDVTHSFCTREFFTRQESYKWLLDALEIYKPVQWEFSRLNISNTVLSKRKIVPLKKYGIELDDPRLYTIKGMRRRGIPPQAINNFVKSLGITYAETIIDNKKFESFIRDELNKTTQRVMCVMDPLKIYIRNAKEQEISIPNSNQKIIFKPYIYIEKSDFKMEDDDKDFLRFTPNQSVGLYMFGAIKFIKFDNDMIIAELTNETPKKFIHWVSCDSIKVTIRLYDPLFRSFNPEEGNYLDNINLDSLKTVVGYCDDRIKGCEVEDKFQFQRVGYFCVDPDTTPENIVFNRIITLI.

Positions 201–211 match the 'HIGH' region motif; the sequence is PEPNGILHIGH. Residues 202 to 204 and 208 to 214 contribute to the ATP site; these read EPN and HIGHAKA. L-glutamine contacts are provided by D234 and Y391. ATP contacts are provided by residues T410, 439–440, and 447–449; these read RL and LSK. The 'KMSKS' region motif lies at 446–450; it reads VLSKR.

It belongs to the class-I aminoacyl-tRNA synthetase family.

The catalysed reaction is tRNA(Gln) + L-glutamine + ATP = L-glutaminyl-tRNA(Gln) + AMP + diphosphate. This Vairimorpha ceranae (strain BRL01) (Microsporidian parasite) protein is Probable glutamine--tRNA ligase.